Here is a 358-residue protein sequence, read N- to C-terminus: Small ribosomal subunit biogenesis GTPase RsgA 2 (358 aa).

Residues 106 to 261 (AEQLIAANVD…LIDTPGMREI (156 aa)) form the CP-type G domain. GTP-binding positions include 151 to 154 (SKAD) and 203 to 211 (GSSGVGKST). Zn(2+) is bound by residues Cys-284, Cys-289, His-291, and Cys-297.

It belongs to the TRAFAC class YlqF/YawG GTPase family. RsgA subfamily. As to quaternary structure, monomer. Associates with 30S ribosomal subunit, binds 16S rRNA. Zn(2+) serves as cofactor.

Its subcellular location is the cytoplasm. In terms of biological role, one of several proteins that assist in the late maturation steps of the functional core of the 30S ribosomal subunit. Helps release RbfA from mature subunits. May play a role in the assembly of ribosomal proteins into the subunit. Circularly permuted GTPase that catalyzes slow GTP hydrolysis, GTPase activity is stimulated by the 30S ribosomal subunit. This is Small ribosomal subunit biogenesis GTPase RsgA 2 from Vibrio parahaemolyticus serotype O3:K6 (strain RIMD 2210633).